Consider the following 185-residue polypeptide: N-alpha-acetyltransferase 30 (185 aa).

The N-acetyltransferase domain maps to 31–179 (IEYIPYQGES…DAVRLLLPLN (149 aa)).

Belongs to the acetyltransferase family. MAK3 subfamily.

Its function is as follows. Probable catalytic component of a complex displaying alpha (N-terminal) acetyltransferase activity. This chain is N-alpha-acetyltransferase 30, found in Dictyostelium discoideum (Social amoeba).